Consider the following 98-residue polypeptide: NADH-ubiquinone oxidoreductase chain 4L (98 aa).

3 helical membrane-spanning segments follow: residues 1-21 (MASI…GVLI), 28-48 (STLL…TLLI), and 61-81 (LILL…LVTI).

It belongs to the complex I subunit 4L family. Core subunit of respiratory chain NADH dehydrogenase (Complex I) which is composed of 45 different subunits.

Its subcellular location is the mitochondrion inner membrane. It catalyses the reaction a ubiquinone + NADH + 5 H(+)(in) = a ubiquinol + NAD(+) + 4 H(+)(out). In terms of biological role, core subunit of the mitochondrial membrane respiratory chain NADH dehydrogenase (Complex I) which catalyzes electron transfer from NADH through the respiratory chain, using ubiquinone as an electron acceptor. Part of the enzyme membrane arm which is embedded in the lipid bilayer and involved in proton translocation. The chain is NADH-ubiquinone oxidoreductase chain 4L (MT-ND4L) from Thylamys elegans (Elegant fat-tailed mouse opossum).